A 287-amino-acid chain; its full sequence is 4-diphosphocytidyl-2-C-methyl-D-erythritol kinase (287 aa).

Lysine 11 is a catalytic residue. 93–103 is an ATP binding site; that stretch reads PFGAGLGGGSS. The active site involves aspartate 135.

This sequence belongs to the GHMP kinase family. IspE subfamily.

The enzyme catalyses 4-CDP-2-C-methyl-D-erythritol + ATP = 4-CDP-2-C-methyl-D-erythritol 2-phosphate + ADP + H(+). It participates in isoprenoid biosynthesis; isopentenyl diphosphate biosynthesis via DXP pathway; isopentenyl diphosphate from 1-deoxy-D-xylulose 5-phosphate: step 3/6. Catalyzes the phosphorylation of the position 2 hydroxy group of 4-diphosphocytidyl-2C-methyl-D-erythritol. The polypeptide is 4-diphosphocytidyl-2-C-methyl-D-erythritol kinase (Pelodictyon phaeoclathratiforme (strain DSM 5477 / BU-1)).